We begin with the raw amino-acid sequence, 682 residues long: Beta-galactosidase (682 aa).

The first 23 residues, 1–23 (MPGFLVRILPLLLPLLLLGPTRG), serve as a signal peptide directing secretion. Residues 24–28 (LRNAT) constitute a propeptide that is removed on maturation. Residue asparagine 26 is glycosylated (N-linked (GlcNAc...) asparagine). Tyrosine 83, glutamate 129, and asparagine 187 together coordinate substrate. Glutamate 188 acts as the Proton donor in catalysis. Cysteine 195 and cysteine 230 are joined by a disulfide. A glycan (N-linked (GlcNAc...) asparagine) is linked at asparagine 247. Catalysis depends on glutamate 268, which acts as the Nucleophile. Tyrosine 333 is a substrate binding site. N-linked (GlcNAc...) asparagine glycans are attached at residues asparagine 464, asparagine 498, asparagine 545, and asparagine 555. A disulfide bond links cysteine 626 and cysteine 634.

This sequence belongs to the glycosyl hydrolase 35 family. In terms of assembly, homodimer. May form higher multimers.

The protein resides in the lysosome. It carries out the reaction Hydrolysis of terminal non-reducing beta-D-galactose residues in beta-D-galactosides.. Functionally, cleaves beta-linked terminal galactosyl residues from gangliosides, glycoproteins, and glycosaminoglycans. The chain is Beta-galactosidase (GLB1) from Macaca fascicularis (Crab-eating macaque).